We begin with the raw amino-acid sequence, 146 residues long: 3-dehydroquinate dehydratase (146 aa).

Tyr24 (proton acceptor) is an active-site residue. Substrate contacts are provided by Asn73, His79, and Asp86. His99 serves as the catalytic Proton donor. Residues 100 to 101 (LS) and Arg110 contribute to the substrate site.

It belongs to the type-II 3-dehydroquinase family. Homododecamer.

It catalyses the reaction 3-dehydroquinate = 3-dehydroshikimate + H2O. The protein operates within metabolic intermediate biosynthesis; chorismate biosynthesis; chorismate from D-erythrose 4-phosphate and phosphoenolpyruvate: step 3/7. Its function is as follows. Catalyzes a trans-dehydration via an enolate intermediate. The polypeptide is 3-dehydroquinate dehydratase (Shewanella baltica (strain OS185)).